The sequence spans 176 residues: RNA pyrophosphohydrolase (176 aa).

One can recognise a Nudix hydrolase domain in the interval 6–149; it reads GYRPNVGIVI…KRDVYRRVMK (144 aa). Residues 38-59 carry the Nudix box motif; that stretch reads GGINPGESAEQAMYRELFEEVG.

This sequence belongs to the Nudix hydrolase family. RppH subfamily. A divalent metal cation serves as cofactor.

In terms of biological role, accelerates the degradation of transcripts by removing pyrophosphate from the 5'-end of triphosphorylated RNA, leading to a more labile monophosphorylated state that can stimulate subsequent ribonuclease cleavage. The chain is RNA pyrophosphohydrolase from Shigella boydii serotype 18 (strain CDC 3083-94 / BS512).